The chain runs to 435 residues: MLSSGAGSSIRKKRNFKGLQLAESPLASPVDASATTPSHKPGEGSAASNASTIGKSSAVTPGGSLALPVKNGLDTEPNSGANYHNKLTQQLANLELGVEYKLDLKNEDLKTLSELGAGNGGTVTKVLHEKSGTVMAKKVVFIDAKPSVRKQILRELQILHECNSPYIVSFYGAYLNEPHICMCMEFMQKDSLDGIYKKYGPISPEICGKIAVAVSHGLTYLYDVHRIIHRDVKPSNILVNGAGQIKICDFGVSGELINSIADTFVGTSTYMSPERIQGDQYSVKSDVWSLGVSIIELALGRFPFAENEEDDDSDADNNYTNEDLAGTLSPTKPAPMISLGQNEKQRRRKSKPAGVSLEGSSHQMSILDLLQHIVNEPPPKLPEGRFPKHMEEFVNLCLLKDPAKRPTPKDLTKHQYVIDADAAKVDLQAWADGMK.

The segment at 1–61 (MLSSGAGSSI…TIGKSSAVTP (61 aa)) is disordered. Positions 46–59 (AASNASTIGKSSAV) are enriched in polar residues. In terms of domain architecture, Protein kinase spans 109–417 (LKTLSELGAG…PKDLTKHQYV (309 aa)). Residues 115–123 (LGAGNGGTV) and Lys-138 contribute to the ATP site. Asp-231 (proton acceptor) is an active-site residue. The interval 307-359 (NEEDDDSDADNNYTNEDLAGTLSPTKPAPMISLGQNEKQRRRKSKPAGVSLEG) is disordered.

The protein belongs to the protein kinase superfamily. STE Ser/Thr protein kinase family. MAP kinase kinase subfamily.

The enzyme catalyses L-seryl-[protein] + ATP = O-phospho-L-seryl-[protein] + ADP + H(+). It carries out the reaction L-threonyl-[protein] + ATP = O-phospho-L-threonyl-[protein] + ADP + H(+). It catalyses the reaction L-tyrosyl-[protein] + ATP = O-phospho-L-tyrosyl-[protein] + ADP + H(+). Functionally, protein kinase that is necessary for a-locus-dependent processes, such as conjugation tube formation, filament formation, and maintenance of filamentous growth, and for a-locus-independent processes, such as tumor induction and teliospore germination. This chain is Dual specificity protein kinase FUZ7 (FUZ7), found in Mycosarcoma maydis (Corn smut fungus).